Consider the following 119-residue polypeptide: uncharacterized protein (119 aa).

Helical transmembrane passes span 61-80 (LISA…LLSV) and 87-103 (VVGV…VDII).

The protein localises to the membrane. This is an uncharacterized protein from Saccharomyces cerevisiae (strain ATCC 204508 / S288c) (Baker's yeast).